The chain runs to 259 residues: DnaJ homolog subfamily C member 9 (259 aa).

Positions aspartate 15 to glycine 82 constitute a J domain. Serine 109 carries the phosphoserine modification. The tract at residues glutamate 171–glycine 248 is required for histone binding.

In terms of assembly, forms a co-chaperone complex with MCM2 and histone H3.3-H4 dimers. Within the complex, interacts (via C-terminus) with MCM2 (via N-terminus); the interaction is histone-dependent. Within the complex, interacts (via C-terminus) with histone H3.3-H4 heterodimers; the interaction is direct. Interacts with histones H4, H3.3, H3.2 and H3.1, but not with CENPA or the testis-specific histone H3.1t. Interacts (via J domain) with HSPA1A, HSPA1B and HSPA8. May interact with TONSL; the interaction seems to be histone-dependent. May interact with HSPA8 and BAG2; the interactions seem to be histone-dependent.

It is found in the nucleus. Its subcellular location is the cytoplasm. The protein localises to the cell membrane. Functionally, acts as a dual histone chaperone and heat shock co-chaperone. As a histone chaperone, forms a co-chaperone complex with MCM2 and histone H3-H4 heterodimers; and may thereby assist MCM2 in histone H3-H4 heterodimer recognition and facilitate the assembly of histones into nucleosomes. May also act as a histone co-chaperone together with TONSL. May recruit histone chaperones ASF1A, NASP and SPT2 to histone H3-H4 heterodimers. Also plays a role as co-chaperone of the HSP70 family of molecular chaperone proteins, such as HSPA1A, HSPA1B and HSPA8. As a co-chaperone, may play a role in the recruitment of HSP70-type molecular chaperone machinery to histone H3-H4 substrates, thereby maintaining the histone structural integrity. Exhibits activity to assemble histones onto DNA in vitro. The polypeptide is DnaJ homolog subfamily C member 9 (Dnajc9) (Mus musculus (Mouse)).